We begin with the raw amino-acid sequence, 330 residues long: Phenylalanine--tRNA ligase alpha subunit (330 aa).

E246 provides a ligand contact to Mg(2+).

It belongs to the class-II aminoacyl-tRNA synthetase family. Phe-tRNA synthetase alpha subunit type 1 subfamily. As to quaternary structure, tetramer of two alpha and two beta subunits. The cofactor is Mg(2+).

The protein resides in the cytoplasm. It carries out the reaction tRNA(Phe) + L-phenylalanine + ATP = L-phenylalanyl-tRNA(Phe) + AMP + diphosphate + H(+). The chain is Phenylalanine--tRNA ligase alpha subunit from Campylobacter jejuni subsp. doylei (strain ATCC BAA-1458 / RM4099 / 269.97).